Consider the following 289-residue polypeptide: Early E1A protein (289 aa).

The interval 41 to 49 is interaction with RB1 in competition with E2F1; the sequence is PTLHELYDL. Positions 76 to 140 are interaction with UBE2I; the sequence is EGIDLLTFPP…PSDDEDEEGE (65 aa). The disordered stretch occupies residues 82–107; sequence TFPPAPGSPEPPHLSRQPEQPEQRAL. Positions 84–93 are enriched in pro residues; that stretch reads PPAPGSPEPP. The residue at position 89 (serine 89) is a Phosphoserine; by host. The PXLXP motif, interaction with host ZMYND11 motif lies at 113–117; sequence PNLVP. An LXCXE motif, interaction with host RB1 and TMEM173/STING motif is present at residues 122 to 126; sequence LTCHE. The segment at 154-174 is a zinc-finger region; that stretch reads CRSCHYHRRNTGDPDIMCSLC. A disordered region spans residues 187 to 245; sequence VSEPEPEPEPEPEPARPTRRPKLVPAILRRPTSPVSRECNSSTDSCDSGPSNTPPEIHP. A phosphoserine; by host mark is found at serine 219 and serine 231. Positions 219-237 are enriched in polar residues; that stretch reads SPVSRECNSSTDSCDSGPS. The Bipartite nuclear localization signal signature appears at 258 to 289; that stretch reads RVGGRRQAVECIEDLLNESGQPLDLSCKRPRP. Positions 279–283 match the PXDLS motif, CTBP-binding motif; sequence PLDLS.

Belongs to the adenoviridae E1A protein family. Interacts with host UBE2I; this interaction interferes with polySUMOylation. Interacts with host RB1; this interaction induces the aberrant dissociation of RB1-E2F1 complex thereby disrupting the activity of RB1 and activating E2F1-regulated genes. Interacts with host ATF7; the interaction enhances ATF7-mediated viral transactivation activity which requires the zinc binding domains of both proteins. Isoform early E1A 32 kDa protein and isoform early E1A 26 kDa protein interact (via N-terminus) with CUL1 and E3 ubiquitin ligase RBX1; these interactions inhibit RBX1-CUL1-dependent elongation reaction of ubiquitin chains and attenuate ubiquitination of SCF(FBXW7) target proteins. Interacts (via PXLXP motif) with host ZMYND11/BS69 (via MYND-type zinc finger); this interaction inhibits E1A mediated transactivation. Interacts with host EP300; this interaction stimulates the acetylation of RB1 by recruiting EP300 and RB1 into a multimeric-protein complex. Interacts with host CTBP1 and CTBP2; this interaction seems to potentiate viral replication. Interacts with host DCAF7. Interacts with host DYRK1A. Interacts with host KPNA4; this interaction allows E1A import into the host nucleus. Interacts with host EP400; this interaction stabilizes MYC. Interacts (via LXCXE motif) with host TMEM173/STING; this interaction impairs the ability of TMEM173/STING to sense cytosolic DNA and promote the production of type I interferon (IFN-alpha and IFN-beta). Interacts (via C-terminus) with host ZBED1/hDREF (via C-terminus); the interaction is direct.

The protein resides in the host nucleus. Functionally, plays a role in viral genome replication by driving entry of quiescent cells into the cell cycle. Stimulation of progression from G1 to S phase allows the virus to efficiently use the cellular DNA replicating machinery to achieve viral genome replication. E1A protein has both transforming and trans-activating activities. Induces the disassembly of the E2F1 transcription factor from RB1 by direct competition for the same binding site on RB1, with subsequent transcriptional activation of E2F1-regulated S-phase genes and of the E2 region of the adenoviral genome. Release of E2F1 leads to the ARF-mediated inhibition of MDM2 and causes TP53/p53 to accumulate because it is not targeted for degradation by MDM2-mediated ubiquitination anymore. This increase in TP53, in turn, would arrest the cell proliferation and direct its death but this effect is counteracted by the viral protein E1B-55K. Inactivation of the ability of RB1 to arrest the cell cycle is critical for cellular transformation, uncontrolled cellular growth and proliferation induced by viral infection. Interaction with RBX1 and CUL1 inhibits ubiquitination of the proteins targeted by SCF(FBXW7) ubiquitin ligase complex, and may be linked to unregulated host cell proliferation. The tumorigenesis-restraining activity of E1A may be related to the disruption of the host CtBP-CtIP complex through the CtBP binding motif. Interacts with host TBP protein; this interaction probably disrupts the TBP-TATA complex. Interaction with host TMEM173/STING impairs the ability of TMEM173/STING to sense cytosolic DNA and promote the production of type I interferon (IFN-alpha and IFN-beta). Promotes the sumoylation of host ZBED1/hDREF with SUMO1. The sequence is that of Early E1A protein from Homo sapiens (Human).